Consider the following 103-residue polypeptide: MGSRCAKLNTGQSPGHSPGHSTGHGRGHESSMKKLMACVSQDNFSLSSAGEEEEEEEEEGEEEEKEELPVQGKLLLLEPERQEEGHKDNAEAQQSPEPKRTPS.

Residues 1–103 form a disordered region; it reads MGSRCAKLNT…QSPEPKRTPS (103 aa). The span at 10–21 shows a compositional bias: low complexity; it reads TGQSPGHSPGHS. Over residues 50–66 the composition is skewed to acidic residues; the sequence is GEEEEEEEEEGEEEEKE. Positions 78–90 are enriched in basic and acidic residues; the sequence is EPERQEEGHKDNA. Ser-95 bears the Phosphoserine mark.

Belongs to the protamine P3 family.

The protein localises to the nucleus. It is found in the chromosome. Functionally, protamines substitute for histones in the chromatin of sperm during the haploid phase of spermatogenesis. They compact sperm DNA into a highly condensed, stable and inactive complex. This chain is Protamine-3 (PRM3), found in Homo sapiens (Human).